The following is a 677-amino-acid chain: DNA ligase (677 aa).

Residues 34–38, 83–84, and glutamate 115 each bind NAD(+); these read DLAFD and SL. The active-site N6-AMP-lysine intermediate is the lysine 117. Arginine 138, glutamate 180, lysine 297, and lysine 321 together coordinate NAD(+). The Zn(2+) site is built by cysteine 416, cysteine 419, cysteine 434, and cysteine 439. The BRCT domain maps to 596–677; that stretch reads KKTSQLAGLT…LIKMLETEQA (82 aa).

This sequence belongs to the NAD-dependent DNA ligase family. LigA subfamily. It depends on Mg(2+) as a cofactor. Mn(2+) is required as a cofactor.

It catalyses the reaction NAD(+) + (deoxyribonucleotide)n-3'-hydroxyl + 5'-phospho-(deoxyribonucleotide)m = (deoxyribonucleotide)n+m + AMP + beta-nicotinamide D-nucleotide.. In terms of biological role, DNA ligase that catalyzes the formation of phosphodiester linkages between 5'-phosphoryl and 3'-hydroxyl groups in double-stranded DNA using NAD as a coenzyme and as the energy source for the reaction. It is essential for DNA replication and repair of damaged DNA. This is DNA ligase from Acidobacterium capsulatum (strain ATCC 51196 / DSM 11244 / BCRC 80197 / JCM 7670 / NBRC 15755 / NCIMB 13165 / 161).